We begin with the raw amino-acid sequence, 403 residues long: Large ribosomal subunit protein uL3 (403 aa).

Residues 1–37 (MSHRKFSAPRHGSLGFLPRKRSSRHRGKVKSFPKDDP) form a disordered region. Serine 13 carries the phosphoserine modification. The segment covering 18–31 (PRKRSSRHRGKVKS) has biased composition (basic residues). Residue lysine 39 forms a Glycyl lysine isopeptide (Lys-Gly) (interchain with G-Cter in SUMO2) linkage. Position 136 is an N6-acetyllysine (lysine 136). Residues lysine 224 and lysine 226 each participate in a glycyl lysine isopeptide (Lys-Gly) (interchain with G-Cter in SUMO2) cross-link. Histidine 245 carries the post-translational modification Tele-methylhistidine. Residues lysine 286 and lysine 294 each carry the N6-acetyllysine; alternate modification. Residue lysine 286 forms a Glycyl lysine isopeptide (Lys-Gly) (interchain with G-Cter in SUMO2); alternate linkage. A Glycyl lysine isopeptide (Lys-Gly) (interchain with G-Cter in SUMO1); alternate cross-link involves residue lysine 294. Residue serine 304 is modified to Phosphoserine. N6-acetyllysine; alternate is present on lysine 366. Residue lysine 366 forms a Glycyl lysine isopeptide (Lys-Gly) (interchain with G-Cter in SUMO2); alternate linkage. N6-acetyllysine is present on lysine 373. Residues lysine 386, lysine 393, and lysine 399 each participate in a glycyl lysine isopeptide (Lys-Gly) (interchain with G-Cter in SUMO2) cross-link.

The protein belongs to the universal ribosomal protein uL3 family. In terms of assembly, component of the large ribosomal subunit. Interacts with DHX33. In terms of processing, constitutively monomethylated at His-245 by METTL18. Methylation at His-245 regulates translation elongation by slowing ribosome traversal on tyrosine codons: slower elongation provides enough time for proper folding of synthesized proteins and prevents cellular aggregation of tyrosine-rich proteins It is not required for incorporation of RPL3 into ribosomes.

Its subcellular location is the nucleus. It is found in the nucleolus. The protein resides in the cytoplasm. Its function is as follows. Component of the large ribosomal subunit. The ribosome is a large ribonucleoprotein complex responsible for the synthesis of proteins in the cell. The polypeptide is Large ribosomal subunit protein uL3 (RPL3) (Macaca fascicularis (Crab-eating macaque)).